Here is a 397-residue protein sequence, read N- to C-terminus: Formate-dependent phosphoribosylglycinamide formyltransferase (397 aa).

Residues glutamate 22–leucine 23 and glutamate 82 contribute to the N(1)-(5-phospho-beta-D-ribosyl)glycinamide site. ATP-binding positions include arginine 114, lysine 155, serine 160–glutamine 165, glutamate 195–valine 198, and glutamate 203. The region spanning cysteine 119–leucine 312 is the ATP-grasp domain. Mg(2+)-binding residues include glutamate 271 and glutamate 283. N(1)-(5-phospho-beta-D-ribosyl)glycinamide-binding positions include aspartate 290, lysine 360, and arginine 367–arginine 368.

It belongs to the PurK/PurT family. As to quaternary structure, homodimer.

The catalysed reaction is N(1)-(5-phospho-beta-D-ribosyl)glycinamide + formate + ATP = N(2)-formyl-N(1)-(5-phospho-beta-D-ribosyl)glycinamide + ADP + phosphate + H(+). It participates in purine metabolism; IMP biosynthesis via de novo pathway; N(2)-formyl-N(1)-(5-phospho-D-ribosyl)glycinamide from N(1)-(5-phospho-D-ribosyl)glycinamide (formate route): step 1/1. Functionally, involved in the de novo purine biosynthesis. Catalyzes the transfer of formate to 5-phospho-ribosyl-glycinamide (GAR), producing 5-phospho-ribosyl-N-formylglycinamide (FGAR). Formate is provided by PurU via hydrolysis of 10-formyl-tetrahydrofolate. This is Formate-dependent phosphoribosylglycinamide formyltransferase from Alcanivorax borkumensis (strain ATCC 700651 / DSM 11573 / NCIMB 13689 / SK2).